Reading from the N-terminus, the 455-residue chain is Chromosomal replication initiator protein DnaA (455 aa).

A domain I, interacts with DnaA modulators region spans residues 1-70 (MTNETWVQVR…RMRLTEAGSP (70 aa)). Positions 70–113 (PVERLEFAVSNTPRAPLKEVKAAAPAASPARARPAPPEEDLRGA) are domain II. The disordered stretch occupies residues 87–109 (KEVKAAAPAASPARARPAPPEED). Over residues 91 to 102 (AAAPAASPARAR) the composition is skewed to low complexity. The interval 114–335 (PLDARFTFDS…GALTRLFAFA (222 aa)) is domain III, AAA+ region. ATP-binding residues include Gly-158, Gly-160, Lys-161, and Thr-162. The interval 336-455 (SLVGREITLD…LQLLRRLLQA (120 aa)) is domain IV, binds dsDNA.

This sequence belongs to the DnaA family. In terms of assembly, oligomerizes as a right-handed, spiral filament on DNA at oriC.

The protein localises to the cytoplasm. Functionally, plays an essential role in the initiation and regulation of chromosomal replication. ATP-DnaA binds to the origin of replication (oriC) to initiate formation of the DNA replication initiation complex once per cell cycle. Binds the DnaA box (a 9 base pair repeat at the origin) and separates the double-stranded (ds)DNA. Forms a right-handed helical filament on oriC DNA; dsDNA binds to the exterior of the filament while single-stranded (ss)DNA is stabiized in the filament's interior. The ATP-DnaA-oriC complex binds and stabilizes one strand of the AT-rich DNA unwinding element (DUE), permitting loading of DNA polymerase. After initiation quickly degrades to an ADP-DnaA complex that is not apt for DNA replication. Binds acidic phospholipids. The sequence is that of Chromosomal replication initiator protein DnaA from Cereibacter sphaeroides (strain ATCC 17029 / ATH 2.4.9) (Rhodobacter sphaeroides).